The sequence spans 177 residues: Ribosome maturation factor RimM (177 aa).

Residues 96 to 177 (DNEFYWVDLI…KITVDWGLDY (82 aa)) form the PRC barrel domain.

The protein belongs to the RimM family. Binds ribosomal protein uS19.

The protein localises to the cytoplasm. Its function is as follows. An accessory protein needed during the final step in the assembly of 30S ribosomal subunit, possibly for assembly of the head region. Essential for efficient processing of 16S rRNA. May be needed both before and after RbfA during the maturation of 16S rRNA. It has affinity for free ribosomal 30S subunits but not for 70S ribosomes. The chain is Ribosome maturation factor RimM from Herminiimonas arsenicoxydans.